A 428-amino-acid chain; its full sequence is Nematode resistance protein-like HSPRO1 (428 aa).

In terms of assembly, interacts with SNF4.

The protein localises to the cytoplasm. In terms of biological role, positive regulator of basal resistance. This chain is Nematode resistance protein-like HSPRO1 (HSPRO1), found in Arabidopsis thaliana (Mouse-ear cress).